The chain runs to 204 residues: Small ribosomal subunit protein uS4 (204 aa).

The S4 RNA-binding domain maps to 93 to 156 (SRLSSVLYHS…AKIPILIEAE (64 aa)).

It belongs to the universal ribosomal protein uS4 family. Part of the 30S ribosomal subunit. Contacts protein S5. The interaction surface between S4 and S5 is involved in control of translational fidelity.

Functionally, one of the primary rRNA binding proteins, it binds directly to 16S rRNA where it nucleates assembly of the body of the 30S subunit. With S5 and S12 plays an important role in translational accuracy. The sequence is that of Small ribosomal subunit protein uS4 from Wolbachia pipientis subsp. Culex pipiens (strain wPip).